The following is a 558-amino-acid chain: Putative polypeptide N-acetylgalactosaminyltransferase 13 (558 aa).

The Cytoplasmic segment spans residues 1–12; sequence MHAGGKYCGPRH. The chain crosses the membrane as a helical; Signal-anchor for type II membrane protein span at residues 13–32; that stretch reads CSFYIIAFLICQLFFLVIFI. Topologically, residues 33 to 558 are lumenal; sequence RNDDASSANE…QFALEMEGQT (526 aa). Asparagine 48 and asparagine 111 each carry an N-linked (GlcNAc...) asparagine glycan. 4 cysteine pairs are disulfide-bonded: cysteine 97-cysteine 335, cysteine 326-cysteine 412, cysteine 445-cysteine 460, and cysteine 484-cysteine 498. Residues 109–225 form a catalytic subdomain A region; that stretch reads EANVSVVISF…EGWLEPLLER (117 aa). Residues aspartate 150 and arginine 186 each contribute to the substrate site. Residue aspartate 209 participates in Mn(2+) binding. Position 210 (serine 210) interacts with substrate. A Mn(2+)-binding site is contributed by histidine 211. Residues 281 to 343 form a catalytic subdomain B region; it reads PYQSPAFAGG…PCSRIGHIFR (63 aa). Tryptophan 312 is a binding site for substrate. Histidine 340 lines the Mn(2+) pocket. Substrate contacts are provided by arginine 343 and histidine 346. A Ricin B-type lectin domain is found at 422–556; the sequence is VSPELRMHFD…SFQFALEMEG (135 aa). An N-linked (GlcNAc...) asparagine glycan is attached at asparagine 501. Cysteines 525 and 539 form a disulfide.

The protein belongs to the glycosyltransferase 2 family. GalNAc-T subfamily. It depends on Mn(2+) as a cofactor. During embryonic stages 16-17, very weak expression in the midgut.

Its subcellular location is the golgi apparatus membrane. It carries out the reaction L-seryl-[protein] + UDP-N-acetyl-alpha-D-galactosamine = a 3-O-[N-acetyl-alpha-D-galactosaminyl]-L-seryl-[protein] + UDP + H(+). It catalyses the reaction L-threonyl-[protein] + UDP-N-acetyl-alpha-D-galactosamine = a 3-O-[N-acetyl-alpha-D-galactosaminyl]-L-threonyl-[protein] + UDP + H(+). It participates in protein modification; protein glycosylation. Its function is as follows. May catalyze the initial reaction in O-linked oligosaccharide biosynthesis, the transfer of an N-acetyl-D-galactosamine residue to a serine or threonine residue on the protein receptor. This chain is Putative polypeptide N-acetylgalactosaminyltransferase 13 (pgant13), found in Drosophila melanogaster (Fruit fly).